A 766-amino-acid chain; its full sequence is U3 small nucleolar RNA-associated protein 14 homolog C (766 aa).

Positions 14-42 (HQEELVDLPKNYPLSENEDEGDSDGERKH) are disordered. Residues Ser-28, Ser-51, Ser-76, and Ser-80 each carry the phosphoserine modification. Lys-121 participates in a covalent cross-link: Glycyl lysine isopeptide (Lys-Gly) (interchain with G-Cter in SUMO2). Thr-204 carries the post-translational modification Phosphothreonine. Coiled-coil stretches lie at residues 216 to 245 (LEEA…KEKK) and 316 to 346 (LEAR…EEEE). The segment at 365-563 (MNVDGPNPWM…EQLINLQNFL (199 aa)) is disordered. A compositionally biased stretch (low complexity) spans 396–405 (ELAAHEVSAS). Phosphoserine is present on residues Ser-403 and Ser-405. Over residues 407–434 (AEERPVAEEEILLREFEERQSLRKRSEL) the composition is skewed to basic and acidic residues. Residue Ser-443 is modified to Phosphoserine. A Glycyl lysine isopeptide (Lys-Gly) (interchain with G-Cter in SUMO2) cross-link involves residue Lys-447. Ser-451 carries the post-translational modification Phosphoserine. The stretch at 452–470 (QEVLSELRALSQKLKEKHQ) forms a coiled coil. A compositionally biased stretch (basic residues) spans 466 to 475 (KEKHQSRKQK). Over residues 502–527 (RSERVQTLEELEELGKEDCFQNKELP) the composition is skewed to basic and acidic residues. Residue Lys-517 forms a Glycyl lysine isopeptide (Lys-Gly) (interchain with G-Cter in SUMO2) linkage. Residues 533–542 (GQQSERTPNN) are compositionally biased toward polar residues. Positions 545 to 555 (DAPKEKKEKEQ) are enriched in basic and acidic residues. At Ser-567 the chain carries Phosphoserine. Lys-732 is covalently cross-linked (Glycyl lysine isopeptide (Lys-Gly) (interchain with G-Cter in SUMO2)). A disordered region spans residues 734-766 (EDVGYQSSSRSDLPVIQRNPKRITTRHNKEEKL).

The protein belongs to the UTP14 family. In terms of tissue distribution, expressed in testis.

The protein localises to the nucleus. It localises to the nucleolus. Essential for spermatogenesis. May be required specifically for ribosome biogenesis and hence protein synthesis during male meiosis. The chain is U3 small nucleolar RNA-associated protein 14 homolog C (UTP14C) from Homo sapiens (Human).